Here is a 232-residue protein sequence, read N- to C-terminus: Small ribosomal subunit protein uS3 (232 aa).

The KH type-2 domain maps to 39 to 107; it reads IREILHKELK…DVVINIVEIR (69 aa).

The protein belongs to the universal ribosomal protein uS3 family. Part of the 30S ribosomal subunit. Forms a tight complex with proteins S10 and S14.

In terms of biological role, binds the lower part of the 30S subunit head. Binds mRNA in the 70S ribosome, positioning it for translation. The protein is Small ribosomal subunit protein uS3 of Rhodopseudomonas palustris (strain HaA2).